The sequence spans 660 residues: uncharacterized protein (660 aa).

Residues Ala220–Asp239 are disordered. Over residues Ala222 to Asp239 the composition is skewed to low complexity.

This is an uncharacterized protein from Callospermophilus lateralis (Golden-mantled ground squirrel).